The sequence spans 312 residues: MKVAVLGAAGGIGQALALLLKTQLPSGSELSLYDIAPVTPGVAVDLSHIPTAVKIKGFAGEDATPALEGADVVLISAGVARKPGMDRSDLFNVNAGIVKNLVQQIATTCPKACIGIITNPVNTTVAIAAEVLKKAGVYDKNKLFGVTTLDIIRSNTFVAELKGKQPDEIEVPVIGGHSGVTILPLLSQIPGVSFTEQEVADLTKRIQNAGTEVVEAKAGGGSATLSMGQAAARFGLSLVRALQGEKGVVECAYVEGDGQYARFFSQPLLLGKNGVEERKSIGKLSAFEQNALEGMLDTLKKDIQLGEAFVNK.

Residues 7 to 13 (GAAGGIG) and Asp-34 contribute to the NAD(+) site. Arg-81 and Arg-87 together coordinate substrate. Residues Asn-94 and 117-119 (ITN) contribute to the NAD(+) site. Positions 119 and 153 each coordinate substrate. The active-site Proton acceptor is His-177. Position 227 (Met-227) interacts with NAD(+).

It belongs to the LDH/MDH superfamily. MDH type 1 family. As to quaternary structure, homodimer.

The enzyme catalyses (S)-malate + NAD(+) = oxaloacetate + NADH + H(+). Functionally, catalyzes the reversible oxidation of malate to oxaloacetate. The polypeptide is Malate dehydrogenase (Escherichia fergusonii (strain ATCC 35469 / DSM 13698 / CCUG 18766 / IAM 14443 / JCM 21226 / LMG 7866 / NBRC 102419 / NCTC 12128 / CDC 0568-73)).